A 325-amino-acid chain; its full sequence is MIDFANFYQLIAKNRLSHWLHTLPAQLHAWQHDNLHGDLPRWNRALNKLPTTAPGHIELQRGVEIGNSQSLSEGERKKVESLLRQFMPWRKGPFTVHGIHIDTEWRSDWKWDRVLPHISPLAGRYVLDVGCGSGYHLWRMVGEGAKLAVGIDPSPLFLCQFEAIRHFTGGDQRAHLLPLGIQELPDLRAFDTVFSMGVLYHRKSPIEHIEQLRNQLKDDGELVLETLVVDGGVNEVLVPTDRYGKMRNVWFIPSSAALKLWVERCGFTDVRIVDENMTSTDEQRRTDWMINESLSDYLDPADPALTVEGHPAPKRAVLIARKAKD.

Residues lysine 91, tryptophan 105, lysine 110, glycine 130, 152 to 154 (DPS), methionine 196, tyrosine 200, and arginine 315 each bind carboxy-S-adenosyl-L-methionine.

Belongs to the class I-like SAM-binding methyltransferase superfamily. CmoB family. In terms of assembly, homotetramer.

The catalysed reaction is carboxy-S-adenosyl-L-methionine + 5-hydroxyuridine(34) in tRNA = 5-carboxymethoxyuridine(34) in tRNA + S-adenosyl-L-homocysteine + H(+). In terms of biological role, catalyzes carboxymethyl transfer from carboxy-S-adenosyl-L-methionine (Cx-SAM) to 5-hydroxyuridine (ho5U) to form 5-carboxymethoxyuridine (cmo5U) at position 34 in tRNAs. The chain is tRNA U34 carboxymethyltransferase from Aeromonas salmonicida (strain A449).